We begin with the raw amino-acid sequence, 433 residues long: Alpha-(1-&gt;3)-arabinofuranosyltransferase (433 aa).

10 helical membrane passes run 118-138 (LFIS…LRMF), 140-160 (FTLT…TETV), 164-184 (LVFT…LRWL), 197-217 (LAIG…LLPL), 224-244 (ALVA…PLVS), 280-300 (WLIL…LWLL), 310-330 (LFWF…VMSL), 333-353 (GYYS…NSVI), 356-376 (WPAW…LFNW), and 385-405 (YLKI…VLYF).

It belongs to the glycosyltransferase 87 family.

The protein localises to the cell membrane. It catalyses the reaction Adds an alpha-D-arabinofuranosyl group from trans,octacis-decaprenylphospho-beta-D-arabinofuranose at the 3-O-position of an alpha-(1-&gt;5)-arabinofuranan chain attached to a beta-(1-&gt;5)-galactofuranan chain.. The protein operates within cell wall biogenesis; cell wall polysaccharide biosynthesis. Involved in the biosynthesis of the arabinogalactan (AG) region of the mycolylarabinogalactan-peptidoglycan (mAGP) complex, an essential component of the mycobacterial cell wall. Catalyzes the addition of an arabinofuranosyl (Araf) residue from the sugar donor beta-D-arabinofuranosyl-1-monophosphoryldecaprenol (DPA) on the C-3 of an alpha-(1-&gt;5)-linked Araf from the arabinan backbone of AG. The polypeptide is Alpha-(1-&gt;3)-arabinofuranosyltransferase (aftC) (Mycobacterium tuberculosis (strain CDC 1551 / Oshkosh)).